We begin with the raw amino-acid sequence, 204 residues long: Holliday junction branch migration complex subunit RuvA (204 aa).

The segment at 1–64 is domain I; that stretch reads MIGRLQGKLI…EDAHLLFGFS (64 aa). A domain II region spans residues 65 to 143; the sequence is TKTDRTLFRE…GLRQPDFFVE (79 aa). The tract at residues 144 to 155 is flexible linker; the sequence is SKHITVPDIVSA. A domain III region spans residues 156-204; the sequence is EKETPNDEAVAALVALGYKPPEAAKMVKKVANGDLTSEQLIREALKAAL.

Belongs to the RuvA family. Homotetramer. Forms an RuvA(8)-RuvB(12)-Holliday junction (HJ) complex. HJ DNA is sandwiched between 2 RuvA tetramers; dsDNA enters through RuvA and exits via RuvB. An RuvB hexamer assembles on each DNA strand where it exits the tetramer. Each RuvB hexamer is contacted by two RuvA subunits (via domain III) on 2 adjacent RuvB subunits; this complex drives branch migration. In the full resolvosome a probable DNA-RuvA(4)-RuvB(12)-RuvC(2) complex forms which resolves the HJ.

The protein localises to the cytoplasm. Its function is as follows. The RuvA-RuvB-RuvC complex processes Holliday junction (HJ) DNA during genetic recombination and DNA repair, while the RuvA-RuvB complex plays an important role in the rescue of blocked DNA replication forks via replication fork reversal (RFR). RuvA specifically binds to HJ cruciform DNA, conferring on it an open structure. The RuvB hexamer acts as an ATP-dependent pump, pulling dsDNA into and through the RuvAB complex. HJ branch migration allows RuvC to scan DNA until it finds its consensus sequence, where it cleaves and resolves the cruciform DNA. The chain is Holliday junction branch migration complex subunit RuvA from Actinobacillus succinogenes (strain ATCC 55618 / DSM 22257 / CCUG 43843 / 130Z).